A 329-amino-acid chain; its full sequence is Glycerol-3-phosphate dehydrogenase [NAD(P)+] (329 aa).

Residues Trp15, His35, and Lys107 each contribute to the NADPH site. Residues Lys107, Gly135, and Ser137 each coordinate sn-glycerol 3-phosphate. Residue Ala139 participates in NADPH binding. Positions 190, 243, 253, 254, and 255 each coordinate sn-glycerol 3-phosphate. Residue Lys190 is the Proton acceptor of the active site. Arg254 lines the NADPH pocket. NADPH contacts are provided by Leu276 and Glu278.

The protein belongs to the NAD-dependent glycerol-3-phosphate dehydrogenase family.

The protein resides in the cytoplasm. The catalysed reaction is sn-glycerol 3-phosphate + NAD(+) = dihydroxyacetone phosphate + NADH + H(+). It catalyses the reaction sn-glycerol 3-phosphate + NADP(+) = dihydroxyacetone phosphate + NADPH + H(+). The protein operates within membrane lipid metabolism; glycerophospholipid metabolism. In terms of biological role, catalyzes the reduction of the glycolytic intermediate dihydroxyacetone phosphate (DHAP) to sn-glycerol 3-phosphate (G3P), the key precursor for phospholipid synthesis. The sequence is that of Glycerol-3-phosphate dehydrogenase [NAD(P)+] from Rhodopseudomonas palustris (strain HaA2).